We begin with the raw amino-acid sequence, 76 residues long: Conotoxin TxMEKL-011 (76 aa).

Residues 1 to 19 (MEKLTILLLVAAVLMSTQA) form the signal peptide. A propeptide spanning residues 20-45 (LVERAGENRSKENIKFLLKRKRAADR) is cleaved from the precursor. Disulfide bonds link Cys-51/Cys-65, Cys-58/Cys-69, and Cys-64/Cys-73.

The protein belongs to the conotoxin O2 superfamily. As to expression, expressed by the venom duct.

It localises to the secreted. The polypeptide is Conotoxin TxMEKL-011 (Conus textile (Cloth-of-gold cone)).